Here is a 313-residue protein sequence, read N- to C-terminus: MSPENQSSVSEFLLLGLPIRPEQQAVFFTLFLGMYLTTVLGNLLIMLLIQLDSHLHTPMYFFLSHLALTDISFSSVTVPKMLMDMRTKYKSILYEECISQMYFFIFFTDLDSFLITSMAYDRYVAICHPLHYTVIMREELCVFLVAVSWILSCASSLSHTLLLTRLSFCAANTIPHVFCDLAALLKLSCSDIFLNELVMFTVGVVVITLPFMCILVSYGYIGATILRVPSTKGIHKALSTCGSHLSVVSLYYGSIFGQYLFPTVSSSIDKDVIVALMYTVVTPMLNPFIYSLRNRDMKEALGKLFSRATFFSW.

The Extracellular segment spans residues 1–25; the sequence is MSPENQSSVSEFLLLGLPIRPEQQA. N-linked (GlcNAc...) asparagine glycosylation is present at asparagine 5. The chain crosses the membrane as a helical span at residues 26 to 49; the sequence is VFFTLFLGMYLTTVLGNLLIMLLI. Residues 50 to 57 are Cytoplasmic-facing; sequence QLDSHLHT. A helical membrane pass occupies residues 58–79; the sequence is PMYFFLSHLALTDISFSSVTVP. At 80 to 100 the chain is on the extracellular side; that stretch reads KMLMDMRTKYKSILYEECISQ. Cysteine 97 and cysteine 189 form a disulfide bridge. The chain crosses the membrane as a helical span at residues 101–120; the sequence is MYFFIFFTDLDSFLITSMAY. Over 121–139 the chain is Cytoplasmic; sequence DRYVAICHPLHYTVIMREE. Residues 140–158 traverse the membrane as a helical segment; it reads LCVFLVAVSWILSCASSLS. Residues 159–196 are Extracellular-facing; that stretch reads HTLLLTRLSFCAANTIPHVFCDLAALLKLSCSDIFLNE. The chain crosses the membrane as a helical span at residues 197 to 219; it reads LVMFTVGVVVITLPFMCILVSYG. The Cytoplasmic segment spans residues 220–236; the sequence is YIGATILRVPSTKGIHK. The chain crosses the membrane as a helical span at residues 237-259; the sequence is ALSTCGSHLSVVSLYYGSIFGQY. The Extracellular segment spans residues 260 to 272; that stretch reads LFPTVSSSIDKDV. A helical transmembrane segment spans residues 273–292; that stretch reads IVALMYTVVTPMLNPFIYSL. Residues 293–313 are Cytoplasmic-facing; the sequence is RNRDMKEALGKLFSRATFFSW.

Belongs to the G-protein coupled receptor 1 family.

The protein localises to the cell membrane. In terms of biological role, odorant receptor. The polypeptide is Olfactory receptor 1J2 (OR1J2) (Homo sapiens (Human)).